Consider the following 737-residue polypeptide: Alpha-adducin (737 aa).

An N-acetylmethionine modification is found at M1. The segment at 1–21 (MNGDSRAAVVTSPPPTTAPHK) is disordered. Residue S12 is modified to Phosphoserine. Phosphoserine; by PKA is present on S59. S64 is subject to Phosphoserine. T331 carries the post-translational modification Phosphothreonine. Phosphoserine occurs at positions 334, 353, 355, 358, and 366. S408 carries the phosphoserine; by PKA modification. 2 disordered regions span residues 421–486 (FASD…SAVP) and 576–737 (RREV…KSDS). S427 carries the post-translational modification Phosphoserine. At T429 the chain carries Phosphothreonine. At S431 the chain carries Phosphoserine. S436 is modified (phosphoserine; by PKA). Phosphothreonine; by ROCK2 is present on T445. Phosphoserine is present on residues S464 and S465. T480 is subject to Phosphothreonine; by ROCK2. The residue at position 481 (S481) is a Phosphoserine; by PKA. Residues 576–601 (RREVERKQKGSEENLDEAREQKEKSP) show a composition bias toward basic and acidic residues. S586, S600, and S613 each carry phosphoserine. The span at 602 to 614 (PDQPAVPHPPPST) shows a compositional bias: pro residues. Position 614 is a phosphothreonine (T614). S678, S707, S710, and S714 each carry phosphoserine. A compositionally biased stretch (low complexity) spans 687-714 (PVAEEAAPSAVEEGAAADPGSDGSPGKS). Basic residues predominate over residues 715–737 (PSKKKKKFRTPSFLKKSKKKSDS). S716 is subject to Phosphoserine; by PKC. The tract at residues 717 to 734 (KKKKKFRTPSFLKKSKKK) is interaction with calmodulin. S726 carries the phosphoserine; by PKA and PKC modification.

Belongs to the aldolase class II family. Adducin subfamily. Heterodimer of an alpha and a beta subunit or an alpha and a gamma subunit. In terms of tissue distribution, expressed in all tissues. Found in much higher levels in reticulocytes than the beta subunit.

Its subcellular location is the cytoplasm. The protein resides in the cytoskeleton. It is found in the cell membrane. In terms of biological role, membrane-cytoskeleton-associated protein that promotes the assembly of the spectrin-actin network. Binds to calmodulin. The chain is Alpha-adducin (ADD1) from Homo sapiens (Human).